Here is a 138-residue protein sequence, read N- to C-terminus: Basic phospholipase A2 PLA-N (138 aa).

The signal sequence occupies residues 1 to 16 (MRTLWIMAVLLVGVEG). 7 disulfide bridges follow: cysteine 42–cysteine 131, cysteine 44–cysteine 60, cysteine 59–cysteine 111, cysteine 65–cysteine 138, cysteine 66–cysteine 104, cysteine 73–cysteine 97, and cysteine 91–cysteine 102. The Ca(2+) site is built by tyrosine 43, glycine 45, and glycine 47. Residue histidine 63 is part of the active site. Aspartate 64 serves as a coordination point for Ca(2+). The active site involves aspartate 105.

The protein belongs to the phospholipase A2 family. Group II subfamily. D49 sub-subfamily. The cofactor is Ca(2+). In terms of tissue distribution, expressed by the venom gland.

The protein resides in the secreted. It catalyses the reaction a 1,2-diacyl-sn-glycero-3-phosphocholine + H2O = a 1-acyl-sn-glycero-3-phosphocholine + a fatty acid + H(+). Its function is as follows. Snake venom phospholipase A2 (PLA2) that displays edema-inducing activities, as well as presynaptic neurotoxicity and myotoxicity. PLA2 catalyzes the calcium-dependent hydrolysis of the 2-acyl groups in 3-sn-phosphoglycerides. The polypeptide is Basic phospholipase A2 PLA-N (Protobothrops flavoviridis (Habu)).